A 113-amino-acid chain; its full sequence is Hydrogenase maturation factor HypA (113 aa).

His-2 contacts Ni(2+). 4 residues coordinate Zn(2+): Cys-73, Cys-76, Cys-89, and Cys-92.

This sequence belongs to the HypA/HybF family.

Its function is as follows. Involved in the maturation of [NiFe] hydrogenases. Required for nickel insertion into the metal center of the hydrogenase. In Azotobacter chroococcum mcd 1, this protein is Hydrogenase maturation factor HypA.